The chain runs to 264 residues: MKKVTVSGLLKKKQAGEKITSLTAYDASFAKMFDEQGVDALLIGDSLGMVLQGEDDTLPVTIDDIAYHTKSVRRGTERAFVLADMPFMSYATPEQTYANAAKLMAAGASMVKMEGGSWLCDTIKGLNLRGVPVCGHLGLTPQSVHVFGGFKVQGREASQAEKLLSEAKALEEAGIQLLVLECVPSSLGKAVSEALTIPVIGIGAGKDTDGQILVMHDMFGISANYMPKFSKNYLVETGDMRKAVSKYIEDVQSGAFPSPEHSFQ.

Residues D45 and D84 each contribute to the Mg(2+) site. Residues 45-46, D84, and K112 contribute to the 3-methyl-2-oxobutanoate site; that span reads DS. E114 serves as a coordination point for Mg(2+). E181 (proton acceptor) is an active-site residue.

It belongs to the PanB family. In terms of assembly, homodecamer; pentamer of dimers. The cofactor is Mg(2+).

It localises to the cytoplasm. The enzyme catalyses 3-methyl-2-oxobutanoate + (6R)-5,10-methylene-5,6,7,8-tetrahydrofolate + H2O = 2-dehydropantoate + (6S)-5,6,7,8-tetrahydrofolate. It participates in cofactor biosynthesis; (R)-pantothenate biosynthesis; (R)-pantoate from 3-methyl-2-oxobutanoate: step 1/2. Catalyzes the reversible reaction in which hydroxymethyl group from 5,10-methylenetetrahydrofolate is transferred onto alpha-ketoisovalerate to form ketopantoate. This chain is 3-methyl-2-oxobutanoate hydroxymethyltransferase, found in Alteromonas mediterranea (strain DSM 17117 / CIP 110805 / LMG 28347 / Deep ecotype).